The sequence spans 57 residues: Metallothionein-2 (57 aa).

The beta stretch occupies residues 1–28; sequence PDPCCNDKCDCKEGECKTGCKCTSCRCP. A divalent metal cation-binding residues include Cys-4, Cys-5, Cys-9, Cys-11, Cys-16, Cys-20, Cys-22, Cys-25, Cys-27, Cys-30, Cys-33, Cys-37, Cys-39, Cys-45, Cys-49, Cys-53, Cys-55, and Cys-56. Residues 29–57 are alpha; it reads PCEQCSSGCKCANKEDCRKTCSKPCSCCP.

The protein belongs to the metallothionein superfamily. Type 3 family.

In terms of biological role, metallothioneins have a high content of cysteine residues that bind various heavy metals. Class I MTS in marine crustacea are involved in the sequestration of elevated levels of heavy-metal ions. This is Metallothionein-2 from Scylla serrata (Mud crab).